The chain runs to 274 residues: Large ribosomal subunit protein uL2 (274 aa).

2 disordered regions span residues 28–55 and 224–274; these read APHA…RHVG and VAMN…RRRK.

Belongs to the universal ribosomal protein uL2 family. Part of the 50S ribosomal subunit. Forms a bridge to the 30S subunit in the 70S ribosome.

One of the primary rRNA binding proteins. Required for association of the 30S and 50S subunits to form the 70S ribosome, for tRNA binding and peptide bond formation. It has been suggested to have peptidyltransferase activity; this is somewhat controversial. Makes several contacts with the 16S rRNA in the 70S ribosome. The sequence is that of Large ribosomal subunit protein uL2 from Pseudomonas putida (strain W619).